A 367-amino-acid chain; its full sequence is Histidinol-phosphate aminotransferase 1 (367 aa).

N6-(pyridoxal phosphate)lysine is present on Lys226.

This sequence belongs to the class-II pyridoxal-phosphate-dependent aminotransferase family. Histidinol-phosphate aminotransferase subfamily. In terms of assembly, homodimer. Requires pyridoxal 5'-phosphate as cofactor.

The catalysed reaction is L-histidinol phosphate + 2-oxoglutarate = 3-(imidazol-4-yl)-2-oxopropyl phosphate + L-glutamate. The protein operates within amino-acid biosynthesis; L-histidine biosynthesis; L-histidine from 5-phospho-alpha-D-ribose 1-diphosphate: step 7/9. The sequence is that of Histidinol-phosphate aminotransferase 1 (hisC1) from Haemophilus influenzae (strain ATCC 51907 / DSM 11121 / KW20 / Rd).